Here is a 656-residue protein sequence, read N- to C-terminus: Fidgetin-like protein 1 (656 aa).

A compositionally biased stretch (polar residues) spans lysine 293 to proline 302. Positions lysine 293–serine 354 are disordered. A compositionally biased stretch (basic and acidic residues) spans arginine 331 to arginine 340. ATP is bound by residues alanine 386 and glycine 426–leucine 431.

Belongs to the AAA ATPase family. As to quaternary structure, hexamer. Requires Mg(2+) as cofactor.

The protein localises to the nucleus. It localises to the cytoplasm. Its subcellular location is the perinuclear region. It catalyses the reaction ATP + H2O = ADP + phosphate + H(+). In terms of biological role, may be involved in DNA double-strand break (DBS) repair via homologous recombination (HR). May regulate osteoblast proliferation and differentiation. The chain is Fidgetin-like protein 1 (fignl1) from Xenopus tropicalis (Western clawed frog).